A 265-amino-acid chain; its full sequence is Mlc titration factor A (265 aa).

His-111, His-148, His-152, and Glu-211 together coordinate Zn(2+).

Belongs to the MtfA family. Interacts with Mlc. The cofactor is Zn(2+).

It is found in the cytoplasm. Functionally, involved in the modulation of the activity of the glucose-phosphotransferase system (glucose-PTS). Interacts with the transcriptional repressor Mlc, preventing its interaction with DNA and leading to the modulation of expression of genes regulated by Mlc, including ptsG, which encodes the PTS system glucose-specific EIICB component. Shows zinc-dependent metallopeptidase activity. The chain is Mlc titration factor A from Salmonella agona (strain SL483).